We begin with the raw amino-acid sequence, 741 residues long: mRNA decapping complex subunit 2 (741 aa).

Residues 1–243 (MSFTNATFSQ…KKRNIANNTT (243 aa)) are interaction with pdc1. Residues 94 to 227 (TRIPVRGAIM…KFYMVIPFLA (134 aa)) enclose the Nudix hydrolase domain. The Nudix box signature appears at 128 to 149 (GKIDKDESDVDCAIREVYEETG). Residues Arg167 and Tyr220 each contribute to the ATP site. Polar residues-rich tracts occupy residues 268–278 (TAPSDLATPQP) and 439–453 (YGSS…QTQQ). 5 disordered regions span residues 268–289 (TAPS…VESH), 425–453 (SVSS…QTQQ), 525–552 (TKKF…PNAN), 592–616 (GLPT…SQVK), and 654–721 (VSPQ…FKGS). 3 stretches are compositionally biased toward basic and acidic residues: residues 606-616 (NNERKASSQVK), 681-690 (ENSETNKNHV), and 707-721 (DQKK…FKGS).

This sequence belongs to the Nudix hydrolase family. DCP2 subfamily. In terms of assembly, component of the decapping complex composed of dcp1 and dcp2. Interacts with edc3. Interacts with pdc1; via N-terminus. Interacts with pdc2. Mn(2+) is required as a cofactor.

The protein resides in the cytoplasm. It is found in the P-body. In terms of biological role, catalytic component of the decapping complex necessary for the degradation of mRNAs, both in normal mRNA turnover and in nonsense-mediated mRNA decay. Removes the 7-methyl guanine cap structure from mRNA molecules, yielding a 5'-phosphorylated mRNA fragment and 7m-GDP. Decapping is the major pathway of mRNA degradation in yeast. It occurs through deadenylation, decapping and subsequent 5' to 3' exonucleolytic decay of the transcript body. The protein is mRNA decapping complex subunit 2 (dcp2) of Schizosaccharomyces pombe (strain 972 / ATCC 24843) (Fission yeast).